Here is a 233-residue protein sequence, read N- to C-terminus: Small ribosomal subunit protein uS3 (233 aa).

Positions 39-107 (IRAFLKRKLY…DVNINIKEER (69 aa)) constitute a KH type-2 domain. Over residues 212-222 (MQPEKTEESAP) the composition is skewed to basic and acidic residues. The disordered stretch occupies residues 212 to 233 (MQPEKTEESAPAKKPRRTRRGK). Basic residues predominate over residues 224–233 (KKPRRTRRGK).

It belongs to the universal ribosomal protein uS3 family. As to quaternary structure, part of the 30S ribosomal subunit. Forms a tight complex with proteins S10 and S14.

Its function is as follows. Binds the lower part of the 30S subunit head. Binds mRNA in the 70S ribosome, positioning it for translation. The sequence is that of Small ribosomal subunit protein uS3 from Campylobacter jejuni subsp. jejuni serotype O:6 (strain 81116 / NCTC 11828).